A 415-amino-acid polypeptide reads, in one-letter code: WD repeat-containing protein JIP5 (415 aa).

WD repeat units lie at residues 5 to 44 (DVGS…KEQA), 104 to 142 (AHDS…CVRE), 145 to 184 (QHFD…PEPF), 189 to 228 (DQDD…GDCV), and 233 to 282 (GHPL…VVAD). The tract at residues 328–415 (GALGVTNENE…DVENAFFDEL (88 aa)) is disordered. A compositionally biased stretch (acidic residues) spans 337 to 346 (EQSDEDEEMD). Over residues 358–367 (DGSGSSSSGE) the composition is skewed to low complexity. Basic and acidic residues predominate over residues 390–405 (EQKPLDVDKPKGRNEI).

Belongs to the WD repeat WDR55 family.

It localises to the nucleus. Its subcellular location is the nucleolus. The sequence is that of WD repeat-containing protein JIP5 (JIP5) from Laccaria bicolor (strain S238N-H82 / ATCC MYA-4686) (Bicoloured deceiver).